A 298-amino-acid polypeptide reads, in one-letter code: Protease HtpX (298 aa).

The next 2 membrane-spanning stretches (helical) occupy residues Ile-4 to Leu-24 and Thr-41 to Ile-61. His-147 lines the Zn(2+) pocket. Glu-148 is a catalytic residue. His-151 is a Zn(2+) binding site. The next 2 helical transmembrane spans lie at Leu-162 to Ile-182 and Gly-193 to Ala-213. Residue Glu-225 coordinates Zn(2+).

It belongs to the peptidase M48B family. The cofactor is Zn(2+).

It localises to the cell inner membrane. The polypeptide is Protease HtpX (Alcanivorax borkumensis (strain ATCC 700651 / DSM 11573 / NCIMB 13689 / SK2)).